The primary structure comprises 397 residues: Elongation factor Tu 2 (397 aa).

The tr-type G domain maps to 10-206 (KPHVNIGTIG…AIDTWIPEPV (197 aa)). The G1 stretch occupies residues 19–26 (GHVDHGKT). GTP is bound at residue 19 to 26 (GHVDHGKT). Thr26 serves as a coordination point for Mg(2+). Residues 61 to 65 (GITIS) form a G2 region. Residues 82–85 (DCPG) form a G3 region. GTP is bound by residues 82–86 (DCPGH) and 137–140 (NKCD). Residues 137–140 (NKCD) form a G4 region. Positions 175–177 (SAL) are G5.

Belongs to the TRAFAC class translation factor GTPase superfamily. Classic translation factor GTPase family. EF-Tu/EF-1A subfamily. Monomer.

The protein resides in the cytoplasm. It carries out the reaction GTP + H2O = GDP + phosphate + H(+). In terms of biological role, GTP hydrolase that promotes the GTP-dependent binding of aminoacyl-tRNA to the A-site of ribosomes during protein biosynthesis. This chain is Elongation factor Tu 2, found in Alkaliphilus metalliredigens (strain QYMF).